The sequence spans 247 residues: V-type proton ATPase subunit D (247 aa).

Belongs to the V-ATPase D subunit family. As to quaternary structure, V-ATPase is a heteromultimeric enzyme made up of two complexes: the ATP-hydrolytic V1 complex and the proton translocation V0 complex. The V1 complex consists of three catalytic AB heterodimers that form a heterohexamer, three peripheral stalks each consisting of EG heterodimers, one central rotor including subunits D and F, and the regulatory subunits C and H. The proton translocation complex V0 consists of the proton transport subunit a, a ring of proteolipid subunits c9c'', rotary subunit d, subunits e and f, and the accessory subunits ATP6AP1/Ac45 and ATP6AP2/PRR. Interacts with SNX10.

The protein resides in the membrane. It localises to the cytoplasmic vesicle. It is found in the clathrin-coated vesicle membrane. The protein localises to the cytoplasm. Its subcellular location is the cytoskeleton. The protein resides in the microtubule organizing center. It localises to the centrosome. It is found in the cell projection. The protein localises to the cilium. In terms of biological role, subunit of the V1 complex of vacuolar(H+)-ATPase (V-ATPase), a multisubunit enzyme composed of a peripheral complex (V1) that hydrolyzes ATP and a membrane integral complex (V0) that translocates protons. V-ATPase is responsible for acidifying and maintaining the pH of intracellular compartments and in some cell types, is targeted to the plasma membrane, where it is responsible for acidifying the extracellular environment. May play a role in cilium biogenesis through regulation of the transport and the localization of proteins to the cilium. This Mus musculus (Mouse) protein is V-type proton ATPase subunit D (Atp6v1d).